A 341-amino-acid polypeptide reads, in one-letter code: SVRSGPFGQIFRPDNFVFGQSGAGNNWAKGHYTEGAELVDSVLDVVRKEAESCDCLQGFQLTHSLGGGTGSGMGTLLISKIREEYPDRIMNTFSVVPSPKVSDTVVEPYNATLSVHQLVENTDETYCIDNEALYDICFRTLKLTTPTYGDLNHLVSATMSGVTTCLRFPGQLNADLRKLAVNMVPFPRLHFFMPGFAPLTSRGSQQYRALTVPELTQQMFDAKNMMAACDPRHGRYLTVAAIFRGRMSMKEVDEQMLNVQNKNSSYFVEWIPNNVKTAVCDIPPRGLKMSATFIGNSTAIQELFKRISEQFTAMFRRKAFLHWYTGEGMDEMEFTEAESNM.

GTP contacts are provided by Ser64, Gly68, Thr69, Gly70, Asn130, and Asn152.

Belongs to the tubulin family. As to quaternary structure, dimer of alpha and beta chains. A typical microtubule is a hollow water-filled tube with an outer diameter of 25 nm and an inner diameter of 15 nM. Alpha-beta heterodimers associate head-to-tail to form protofilaments running lengthwise along the microtubule wall with the beta-tubulin subunit facing the microtubule plus end conferring a structural polarity. Microtubules usually have 13 protofilaments but different protofilament numbers can be found in some organisms and specialized cells. It depends on Mg(2+) as a cofactor.

Its subcellular location is the cytoplasm. The protein localises to the cytoskeleton. Functionally, tubulin is the major constituent of microtubules, a cylinder consisting of laterally associated linear protofilaments composed of alpha- and beta-tubulin heterodimers. Microtubules grow by the addition of GTP-tubulin dimers to the microtubule end, where a stabilizing cap forms. Below the cap, tubulin dimers are in GDP-bound state, owing to GTPase activity of alpha-tubulin. This Haliotis discus (Abalone) protein is Tubulin beta chain.